The chain runs to 549 residues: Glucose-6-phosphate isomerase (549 aa).

Glu-355 serves as the catalytic Proton donor. Active-site residues include His-386 and Lys-514.

This sequence belongs to the GPI family.

Its subcellular location is the cytoplasm. The catalysed reaction is alpha-D-glucose 6-phosphate = beta-D-fructose 6-phosphate. Its pathway is carbohydrate biosynthesis; gluconeogenesis. It functions in the pathway carbohydrate degradation; glycolysis; D-glyceraldehyde 3-phosphate and glycerone phosphate from D-glucose: step 2/4. Functionally, catalyzes the reversible isomerization of glucose-6-phosphate to fructose-6-phosphate. In Salmonella choleraesuis (strain SC-B67), this protein is Glucose-6-phosphate isomerase.